The primary structure comprises 392 residues: MTLLGTALRPAATRVMLLGSGELGKEVAIECQRLGVEVIAVDRYADAPAMHVAHRSHVINMLDGDALRRVVELEKPHYIVPEIEAIATDMLIQLEEEGLNVVPCARATKLTMNREGIRRLAAEELQLPTSTYRFADSESLFREAVADIGYPCIVKPVMSSSGKGQTFIRSAEQLAQAWKYAQQGGRAGAGRVIVEGVVKFDFEITLLTVSAVDGVHFCAPVGHRQEDGDYRESWQPQQMSPLALERAQEIARKVVLALGGYGLFGVELFVCGDEVIFSEVSPRPHDTGMVTLISQDLSEFALHVRAFLGLPVGGIRQYGPAASAVILPQLTSQNVTFDNVQNAVGADLQIRLFGKPEIDGSRRLGVALATAESVVDAIERAKHAAGQVKVQG.

Residues 22–23 (EL) and Glu-82 each bind N(1)-(5-phospho-beta-D-ribosyl)glycinamide. Residues Arg-114, Lys-155, 160–165 (SSGKGQ), 195–198 (EGVV), and Glu-203 contribute to the ATP site. Residues 119-308 (RLAAEELQLP…EFALHVRAFL (190 aa)) form the ATP-grasp domain. Glu-267 and Glu-279 together coordinate Mg(2+). Residues Asp-286, Lys-355, and 362–363 (RR) contribute to the N(1)-(5-phospho-beta-D-ribosyl)glycinamide site.

Belongs to the PurK/PurT family. As to quaternary structure, homodimer.

The enzyme catalyses N(1)-(5-phospho-beta-D-ribosyl)glycinamide + formate + ATP = N(2)-formyl-N(1)-(5-phospho-beta-D-ribosyl)glycinamide + ADP + phosphate + H(+). It participates in purine metabolism; IMP biosynthesis via de novo pathway; N(2)-formyl-N(1)-(5-phospho-D-ribosyl)glycinamide from N(1)-(5-phospho-D-ribosyl)glycinamide (formate route): step 1/1. Its function is as follows. Involved in the de novo purine biosynthesis. Catalyzes the transfer of formate to 5-phospho-ribosyl-glycinamide (GAR), producing 5-phospho-ribosyl-N-formylglycinamide (FGAR). Formate is provided by PurU via hydrolysis of 10-formyl-tetrahydrofolate. The chain is Formate-dependent phosphoribosylglycinamide formyltransferase from Shigella sonnei (strain Ss046).